The primary structure comprises 475 residues: MMINVQTVAVIGSGTMGAGIAEVAASHGHQVLLYDISAEALTRAIDGIHARLNSRVTRGKLTAETCERTLKRLIPVTDIHALAAADLVIEAASERLEVKKALFAQLAEVCPPQTLLTTNTSSISITAIAAEIKNPERVAGLHFFNPAPVMKLVEVVSGLATAAEVVEQLCELTLSWGKQPVRCHSTPGFIVNRVARPYYSEAWRALEEQVAAPEVIDAALRDGAGFPMGPLELTDLIGQDVNFAVTCSVFNAFWQERRFLPSLVQQELVIGGRLGKKSGLGVYDWRAEREAVVGLEAVSDSFSPMKVEKKSDGVTEIDDVLLIETQGETAQALAIRLARPVVVIDKMAGKVVTIAAAAVNPDSATRKAIYYLQQQGKTVLQIADYPGMLIWRTVAMIINEALDALQKGVASEQDIDTAMRLGVNYPYGPLAWGAQLGWQRILRLLENLQHHYGEERYRPCSLLRQRALLESGYES.

The protein belongs to the 3-hydroxyacyl-CoA dehydrogenase family. As to quaternary structure, homotrimer.

It catalyses the reaction (3S)-3-hydroxyadipyl-CoA + NAD(+) = 3-oxoadipyl-CoA + NADH + H(+). The protein operates within aromatic compound metabolism; phenylacetate degradation. In terms of biological role, catalyzes the oxidation of 3-hydroxyadipyl-CoA to yield 3-oxoadipyl-CoA. The sequence is that of 3-hydroxyadipyl-CoA dehydrogenase (paaH) from Escherichia coli (strain K12).